The chain runs to 335 residues: Phosphatidate cytidylyltransferase, mitochondrial (335 aa).

Belongs to the TAM41 family. Requires Mg(2+) as cofactor.

It is found in the mitochondrion inner membrane. The enzyme catalyses a 1,2-diacyl-sn-glycero-3-phosphate + CTP + H(+) = a CDP-1,2-diacyl-sn-glycerol + diphosphate. The protein operates within phospholipid metabolism; CDP-diacylglycerol biosynthesis; CDP-diacylglycerol from sn-glycerol 3-phosphate: step 3/3. Catalyzes the conversion of phosphatidic acid (PA) to CDP-diacylglycerol (CDP-DAG), an essential intermediate in the synthesis of phosphatidylglycerol, cardiolipin and phosphatidylinositol. The chain is Phosphatidate cytidylyltransferase, mitochondrial (TAMM41) from Bos taurus (Bovine).